Here is a 105-residue protein sequence, read N- to C-terminus: Nucleoid-associated protein Lm4b_02677 (105 aa).

Residues 1–16 (MRGMGNMQGMMKQMQK) are compositionally biased toward low complexity. The disordered stretch occupies residues 1-23 (MRGMGNMQGMMKQMQKMQKEMAK).

Belongs to the YbaB/EbfC family. As to quaternary structure, homodimer.

The protein localises to the cytoplasm. The protein resides in the nucleoid. Binds to DNA and alters its conformation. May be involved in regulation of gene expression, nucleoid organization and DNA protection. This Listeria monocytogenes serotype 4b (strain CLIP80459) protein is Nucleoid-associated protein Lm4b_02677.